We begin with the raw amino-acid sequence, 849 residues long: Protein translocase subunit SecA (849 aa).

ATP contacts are provided by residues glutamine 85, 103–107 (GEGKT), and aspartate 493. Zn(2+) contacts are provided by cysteine 832, cysteine 834, cysteine 843, and histidine 844.

This sequence belongs to the SecA family. As to quaternary structure, monomer and homodimer. Part of the essential Sec protein translocation apparatus which comprises SecA, SecYEG and auxiliary proteins SecDF. Other proteins may also be involved. It depends on Zn(2+) as a cofactor.

Its subcellular location is the cell membrane. The protein localises to the cytoplasm. It catalyses the reaction ATP + H2O + cellular proteinSide 1 = ADP + phosphate + cellular proteinSide 2.. Functionally, part of the Sec protein translocase complex. Interacts with the SecYEG preprotein conducting channel. Has a central role in coupling the hydrolysis of ATP to the transfer of proteins into and across the cell membrane, serving as an ATP-driven molecular motor driving the stepwise translocation of polypeptide chains across the membrane. The chain is Protein translocase subunit SecA from Streptococcus thermophilus (strain ATCC BAA-491 / LMD-9).